The primary structure comprises 424 residues: Tyrosine--tRNA ligase (424 aa).

Tyr-37 provides a ligand contact to L-tyrosine. A 'HIGH' region motif is present at residues 42-51 (PTADSLHLGH). Residues Tyr-175 and Gln-179 each coordinate L-tyrosine. The 'KMSKS' region motif lies at 235–239 (KFGKT). An ATP-binding site is contributed by Lys-238. The S4 RNA-binding domain occupies 357–414 (ADLQQALVNAELVPSRGQARTMIGSNAVAINGEKQADPEYVFTDADRLFGRYTLLRRG).

The protein belongs to the class-I aminoacyl-tRNA synthetase family. TyrS type 1 subfamily. In terms of assembly, homodimer.

The protein resides in the cytoplasm. The enzyme catalyses tRNA(Tyr) + L-tyrosine + ATP = L-tyrosyl-tRNA(Tyr) + AMP + diphosphate + H(+). In terms of biological role, catalyzes the attachment of tyrosine to tRNA(Tyr) in a two-step reaction: tyrosine is first activated by ATP to form Tyr-AMP and then transferred to the acceptor end of tRNA(Tyr). This is Tyrosine--tRNA ligase from Yersinia pseudotuberculosis serotype O:1b (strain IP 31758).